The chain runs to 440 residues: MQAYFDQLDRVRYEGPKTTNPLAFRHYNPDELVLGKRMEDHLRFAACYWHTFCWNGADMFGVGAFDRPWQQPGEALMLAKRKADVAFEFFHKLNVPFYCFHDVDVSPEGASLKEYKNNFAEMVDVLAAKQEQSGVKLLWGTANCFTNPRYGAGAATNPDPEVFSWAATQVVTAMEATKRLGGENYVLWGGREGYETLLNTDLRQEREQLGRFMQMVVEHKHKIGFQGTLLIEPKPQEPTKHQYDYDAATVYGFLKQFGLEKEIKLNIEANHATLAGHSFHHEIATAIALGLFGSVDANRGDAQLGWDTDQFPNSVEENALVMYEILKAGGFTTGGLNFDAKVRRQSTDKYDLFYGHIGAMDTMALALKVAARMIEDGELDKRVAQRYSGWNSELGQQILKGQMSLSDLAKYAQDHNLSPVHQSGHQELLESLVNHYLFDK.

Active-site residues include His101 and Asp104. Glu232, Glu268, His271, Asp296, Asp307, Asp309, and Asp339 together coordinate Mg(2+).

This sequence belongs to the xylose isomerase family. In terms of assembly, homotetramer. The cofactor is Mg(2+).

It localises to the cytoplasm. The catalysed reaction is alpha-D-xylose = alpha-D-xylulofuranose. This Escherichia fergusonii (strain ATCC 35469 / DSM 13698 / CCUG 18766 / IAM 14443 / JCM 21226 / LMG 7866 / NBRC 102419 / NCTC 12128 / CDC 0568-73) protein is Xylose isomerase.